The primary structure comprises 603 residues: DNA mismatch repair protein MutL (603 aa).

Belongs to the DNA mismatch repair MutL/HexB family.

Its function is as follows. This protein is involved in the repair of mismatches in DNA. It is required for dam-dependent methyl-directed DNA mismatch repair. May act as a 'molecular matchmaker', a protein that promotes the formation of a stable complex between two or more DNA-binding proteins in an ATP-dependent manner without itself being part of a final effector complex. This chain is DNA mismatch repair protein MutL, found in Nitrobacter hamburgensis (strain DSM 10229 / NCIMB 13809 / X14).